Here is a 158-residue protein sequence, read N- to C-terminus: S-ribosylhomocysteine lyase (158 aa).

Fe cation contacts are provided by H54, H58, and C124.

It belongs to the LuxS family. Homodimer. Requires Fe cation as cofactor.

The catalysed reaction is S-(5-deoxy-D-ribos-5-yl)-L-homocysteine = (S)-4,5-dihydroxypentane-2,3-dione + L-homocysteine. Functionally, involved in the synthesis of autoinducer 2 (AI-2) which is secreted by bacteria and is used to communicate both the cell density and the metabolic potential of the environment. The regulation of gene expression in response to changes in cell density is called quorum sensing. Catalyzes the transformation of S-ribosylhomocysteine (RHC) to homocysteine (HC) and 4,5-dihydroxy-2,3-pentadione (DPD). This Lactiplantibacillus plantarum (strain ATCC BAA-793 / NCIMB 8826 / WCFS1) (Lactobacillus plantarum) protein is S-ribosylhomocysteine lyase.